The sequence spans 173 residues: Crossover junction endodeoxyribonuclease RuvC (173 aa).

Residues D8, E67, and D139 contribute to the active site. Residues D8, E67, and D139 each coordinate Mg(2+).

The protein belongs to the RuvC family. In terms of assembly, homodimer which binds Holliday junction (HJ) DNA. The HJ becomes 2-fold symmetrical on binding to RuvC with unstacked arms; it has a different conformation from HJ DNA in complex with RuvA. In the full resolvosome a probable DNA-RuvA(4)-RuvB(12)-RuvC(2) complex forms which resolves the HJ. It depends on Mg(2+) as a cofactor.

It localises to the cytoplasm. It carries out the reaction Endonucleolytic cleavage at a junction such as a reciprocal single-stranded crossover between two homologous DNA duplexes (Holliday junction).. In terms of biological role, the RuvA-RuvB-RuvC complex processes Holliday junction (HJ) DNA during genetic recombination and DNA repair. Endonuclease that resolves HJ intermediates. Cleaves cruciform DNA by making single-stranded nicks across the HJ at symmetrical positions within the homologous arms, yielding a 5'-phosphate and a 3'-hydroxyl group; requires a central core of homology in the junction. The consensus cleavage sequence is 5'-(A/T)TT(C/G)-3'. Cleavage occurs on the 3'-side of the TT dinucleotide at the point of strand exchange. HJ branch migration catalyzed by RuvA-RuvB allows RuvC to scan DNA until it finds its consensus sequence, where it cleaves and resolves the cruciform DNA. This Aliivibrio salmonicida (strain LFI1238) (Vibrio salmonicida (strain LFI1238)) protein is Crossover junction endodeoxyribonuclease RuvC.